The chain runs to 178 residues: Bifunctional protein PyrR (178 aa).

Residues 41-42 (RR), 103-111 (DDVLYTGRT), and Arg-136 each bind substrate. The short motif at 99–111 (VILVDDVLYTGRT) is the PRPP-binding element.

This sequence belongs to the purine/pyrimidine phosphoribosyltransferase family. PyrR subfamily. Homodimer and homohexamer; in equilibrium.

It carries out the reaction UMP + diphosphate = 5-phospho-alpha-D-ribose 1-diphosphate + uracil. Functionally, regulates transcriptional attenuation of the pyrimidine nucleotide (pyr) operon by binding in a uridine-dependent manner to specific sites on pyr mRNA. This disrupts an antiterminator hairpin in the RNA and favors formation of a downstream transcription terminator, leading to a reduced expression of downstream genes. Also displays a weak uracil phosphoribosyltransferase activity which is not physiologically significant. The sequence is that of Bifunctional protein PyrR from Clostridium acetobutylicum (strain ATCC 824 / DSM 792 / JCM 1419 / IAM 19013 / LMG 5710 / NBRC 13948 / NRRL B-527 / VKM B-1787 / 2291 / W).